Consider the following 471-residue polypeptide: Tryptophanase (471 aa).

At K270 the chain carries N6-(pyridoxal phosphate)lysine.

This sequence belongs to the beta-eliminating lyase family. Homotetramer. The cofactor is pyridoxal 5'-phosphate.

The catalysed reaction is L-tryptophan + H2O = indole + pyruvate + NH4(+). It participates in amino-acid degradation; L-tryptophan degradation via pyruvate pathway; indole and pyruvate from L-tryptophan: step 1/1. This chain is Tryptophanase, found in Histophilus somni (strain 129Pt) (Haemophilus somnus).